The primary structure comprises 257 residues: Deoxyribose-phosphate aldolase (257 aa).

Catalysis depends on D102, which acts as the Proton donor/acceptor. K166 functions as the Schiff-base intermediate with acetaldehyde in the catalytic mechanism. K198 functions as the Proton donor/acceptor in the catalytic mechanism.

This sequence belongs to the DeoC/FbaB aldolase family. DeoC type 2 subfamily.

It is found in the cytoplasm. It carries out the reaction 2-deoxy-D-ribose 5-phosphate = D-glyceraldehyde 3-phosphate + acetaldehyde. It participates in carbohydrate degradation; 2-deoxy-D-ribose 1-phosphate degradation; D-glyceraldehyde 3-phosphate and acetaldehyde from 2-deoxy-alpha-D-ribose 1-phosphate: step 2/2. In terms of biological role, catalyzes a reversible aldol reaction between acetaldehyde and D-glyceraldehyde 3-phosphate to generate 2-deoxy-D-ribose 5-phosphate. The sequence is that of Deoxyribose-phosphate aldolase from Aeromonas hydrophila subsp. hydrophila (strain ATCC 7966 / DSM 30187 / BCRC 13018 / CCUG 14551 / JCM 1027 / KCTC 2358 / NCIMB 9240 / NCTC 8049).